A 279-amino-acid polypeptide reads, in one-letter code: Putative cysteine-rich repeat secretory protein 22 (279 aa).

An N-terminal signal peptide occupies residues 1 to 31; sequence MSSSSASKLLGSVLVFAMISVQIVFIHCVMS. Gnk2-homologous domains follow at residues 44 to 146 and 152 to 276; these read YLHH…PINS and YEYN…LYRF.

The protein belongs to the cysteine-rich repeat secretory protein family.

The protein localises to the secreted. The polypeptide is Putative cysteine-rich repeat secretory protein 22 (CRRSP22) (Arabidopsis thaliana (Mouse-ear cress)).